The sequence spans 252 residues: Transcription factor bHLH117 (252 aa).

Residues 103–141 are disordered; the sequence is LFPSLSPPLPAAKRQKLNSTSSSTTSGSPTASNDGGIIT. The span at 121–134 shows a compositional bias: low complexity; that stretch reads STSSSTTSGSPTAS. One can recognise a bHLH domain in the interval 130 to 179; sequence SPTASNDGGIITKRRKISDKIRSLEKLMPWERKMNLAMTLEESHKYIKFL.

In terms of assembly, homodimer.

It localises to the nucleus. The chain is Transcription factor bHLH117 (BHLH117) from Arabidopsis thaliana (Mouse-ear cress).